The primary structure comprises 102 residues: NADH-quinone oxidoreductase subunit K (102 aa).

A run of 3 helical transmembrane segments spans residues 6 to 26 (MHHGLLLAAILFALGMIGILV), 30 to 50 (LIFILMSIEIMLNAAGLAFVV), and 64 to 84 (FIFILSVAAAEVSVGLALLLL).

This sequence belongs to the complex I subunit 4L family. As to quaternary structure, NDH-1 is composed of 14 different subunits. Subunits NuoA, H, J, K, L, M, N constitute the membrane sector of the complex.

The protein resides in the cell inner membrane. It catalyses the reaction a quinone + NADH + 5 H(+)(in) = a quinol + NAD(+) + 4 H(+)(out). Functionally, NDH-1 shuttles electrons from NADH, via FMN and iron-sulfur (Fe-S) centers, to quinones in the respiratory chain. The immediate electron acceptor for the enzyme in this species is believed to be ubiquinone. Couples the redox reaction to proton translocation (for every two electrons transferred, four hydrogen ions are translocated across the cytoplasmic membrane), and thus conserves the redox energy in a proton gradient. The protein is NADH-quinone oxidoreductase subunit K of Nitrosospira multiformis (strain ATCC 25196 / NCIMB 11849 / C 71).